Here is a 194-residue protein sequence, read N- to C-terminus: Calcium-binding protein J (194 aa).

EF-hand domains follow at residues 62-97 (WDKD…MTKA) and 98-133 (PVVE…AVAC). 9 residues coordinate Ca(2+): Asp75, Asp77, Asn79, Glu86, Asp111, Asp113, Ser115, His117, and Glu122.

The protein belongs to the recoverin family.

The sequence is that of Calcium-binding protein J (cbpJ) from Dictyostelium discoideum (Social amoeba).